The chain runs to 177 residues: ATP synthase subunit b, chloroplastic (177 aa).

A helical membrane pass occupies residues 22-42; sequence ILETNIINLAAVVGIVVFFVG.

It belongs to the ATPase B chain family. As to quaternary structure, F-type ATPases have 2 components, F(1) - the catalytic core - and F(0) - the membrane proton channel. F(1) has five subunits: alpha(3), beta(3), gamma(1), delta(1), epsilon(1). F(0) has four main subunits: a(1), b(1), b'(1) and c(10-14). The alpha and beta chains form an alternating ring which encloses part of the gamma chain. F(1) is attached to F(0) by a central stalk formed by the gamma and epsilon chains, while a peripheral stalk is formed by the delta, b and b' chains.

It is found in the plastid. The protein localises to the chloroplast thylakoid membrane. In terms of biological role, f(1)F(0) ATP synthase produces ATP from ADP in the presence of a proton or sodium gradient. F-type ATPases consist of two structural domains, F(1) containing the extramembraneous catalytic core and F(0) containing the membrane proton channel, linked together by a central stalk and a peripheral stalk. During catalysis, ATP synthesis in the catalytic domain of F(1) is coupled via a rotary mechanism of the central stalk subunits to proton translocation. Functionally, component of the F(0) channel, it forms part of the peripheral stalk, linking F(1) to F(0). This chain is ATP synthase subunit b, chloroplastic, found in Oedogonium cardiacum (Filamentous green alga).